A 274-amino-acid polypeptide reads, in one-letter code: 2,3,4,5-tetrahydropyridine-2,6-dicarboxylate N-succinyltransferase (274 aa).

Arg-104 and Asp-141 together coordinate substrate.

This sequence belongs to the transferase hexapeptide repeat family. As to quaternary structure, homotrimer.

It is found in the cytoplasm. It catalyses the reaction (S)-2,3,4,5-tetrahydrodipicolinate + succinyl-CoA + H2O = (S)-2-succinylamino-6-oxoheptanedioate + CoA. It participates in amino-acid biosynthesis; L-lysine biosynthesis via DAP pathway; LL-2,6-diaminopimelate from (S)-tetrahydrodipicolinate (succinylase route): step 1/3. Inhibited by p-(chloromercuri)benzenesulfonic acid and cobalt. In Unknown prokaryotic organism, this protein is 2,3,4,5-tetrahydropyridine-2,6-dicarboxylate N-succinyltransferase (dapD).